Consider the following 196-residue polypeptide: ECF RNA polymerase sigma factor SigK (196 aa).

Residues 39-105 (YDQTRARVYG…RAVDRVRSEQ (67 aa)) form a sigma-70 factor domain-2 region. The short motif at 62–65 (ETTQ) is the Polymerase core binding element. A sigma-70 factor domain-4 region spans residues 142 to 191 (CLDSLTDVQRECIQLAYYDGLTYAQVADRLAANLATIKSRMRDGIRALRK). The segment at residues 164–183 (YAQVADRLAANLATIKSRMR) is a DNA-binding region (H-T-H motif).

It belongs to the sigma-70 factor family. ECF subfamily. As to quaternary structure, interacts transiently with the RNA polymerase catalytic core formed by RpoA, RpoB, RpoC and RpoZ (2 alpha, 1 beta, 1 beta' and 1 omega subunit) to form the RNA polymerase holoenzyme that can initiate transcription. Interacts (via sigma-70 factor domain 4) with anti-sigma-K factor RskA.

In terms of biological role, sigma factors are initiation factors that promote the attachment of RNA polymerase to specific initiation sites and are then released. Extracytoplasmic function (ECF) sigma factors are held in an inactive form by an anti-sigma factor until released by regulated intramembrane proteolysis. This chain is ECF RNA polymerase sigma factor SigK (sigK), found in Mycolicibacterium vanbaalenii (strain DSM 7251 / JCM 13017 / BCRC 16820 / KCTC 9966 / NRRL B-24157 / PYR-1) (Mycobacterium vanbaalenii).